The chain runs to 216 residues: ADP-sugar pyrophosphatase (216 aa).

N-acetylmethionine is present on M1. S3 and S10 each carry phosphoserine. Residue W28 participates in substrate binding. K42 participates in a covalent cross-link: Glycyl lysine isopeptide (Lys-Gly) (interchain with G-Cter in SUMO2). A Phosphothreonine modification is found at T45. Residues 46-47 and R51 each bind substrate; that span reads WE. A Nudix hydrolase domain is found at 57 to 194; the sequence is QTADGVAVIP…EEHLTVDARV (138 aa). The residue at position 74 (Y74) is a Phosphotyrosine. A substrate-binding site is contributed by R84. A96 is a Mg(2+) binding site. Residues 97–118 carry the Nudix box motif; that stretch reads GLIDDGETPEAAALRELEEETG. A substrate-binding site is contributed by L98. E112 and E116 together coordinate Mg(2+). D133 provides a ligand contact to substrate. E163 serves as a coordination point for Mg(2+). An N6-acetyllysine mark is found at K207 and K215.

Belongs to the Nudix hydrolase family. Homodimer. Interacts with PARG. Requires Mg(2+) as cofactor. In terms of processing, phosphorylation at Thr-45 is required for homodimer stability; dephosphorylation results in destabilization of the homodimer. Dephosphorylation at Thr-45 promotes the ATP-synthesis activity.

The protein localises to the nucleus. It catalyses the reaction D-ribose 5-phosphate + ATP + H(+) = ADP-D-ribose + diphosphate. The enzyme catalyses ADP-D-ribose + H2O = D-ribose 5-phosphate + AMP + 2 H(+). The catalysed reaction is 8-oxo-dGDP + H2O = 8-oxo-dGMP + phosphate + H(+). Functionally, enzyme that can either act as an ADP-sugar pyrophosphatase in absence of diphosphate or catalyze the synthesis of ATP in presence of diphosphate. In absence of diphosphate, hydrolyzes with similar activities various modified nucleoside diphosphates such as ADP-ribose, ADP-mannose, ADP-glucose, 8-oxo-GDP and 8-oxo-dGDP. Can also hydrolyze other nucleotide sugars with low activity. In presence of diphosphate, mediates the synthesis of ATP in the nucleus by catalyzing the conversion of ADP-ribose to ATP and ribose 5-phosphate. Nuclear ATP synthesis takes place when dephosphorylated at Thr-45. Nuclear ATP generation is required for extensive chromatin remodeling events that are energy-consuming. Does not play a role in U8 snoRNA decapping activity. Binds U8 snoRNA. This is ADP-sugar pyrophosphatase from Pongo abelii (Sumatran orangutan).